We begin with the raw amino-acid sequence, 440 residues long: Adenylosuccinate synthetase (440 aa).

GTP contacts are provided by residues 11-17 (GDEGKGG) and 39-41 (GHT). Residue Asp12 is the Proton acceptor of the active site. Residues Asp12 and Gly39 each coordinate Mg(2+). Residues 12 to 15 (DEGK), 37 to 40 (NAGH), Thr127, Arg141, Gln230, Thr245, and Arg311 each bind IMP. His40 serves as the catalytic Proton donor. Position 307–313 (307–313 (TVTGRPR)) interacts with substrate. GTP contacts are provided by residues Arg313, 339–341 (HLD), and 424–426 (GVG).

This sequence belongs to the adenylosuccinate synthetase family. As to quaternary structure, homodimer. Mg(2+) serves as cofactor.

Its subcellular location is the cytoplasm. It catalyses the reaction IMP + L-aspartate + GTP = N(6)-(1,2-dicarboxyethyl)-AMP + GDP + phosphate + 2 H(+). It functions in the pathway purine metabolism; AMP biosynthesis via de novo pathway; AMP from IMP: step 1/2. Functionally, plays an important role in the de novo pathway of purine nucleotide biosynthesis. Catalyzes the first committed step in the biosynthesis of AMP from IMP. The protein is Adenylosuccinate synthetase of Halobacterium salinarum (strain ATCC 29341 / DSM 671 / R1).